The sequence spans 69 residues: uncharacterized protein (69 aa).

This is an uncharacterized protein from Sinorhizobium fredii (strain NBRC 101917 / NGR234).